A 249-amino-acid chain; its full sequence is 2-C-methyl-D-erythritol 4-phosphate cytidylyltransferase (249 aa).

It belongs to the IspD/TarI cytidylyltransferase family. IspD subfamily.

The catalysed reaction is 2-C-methyl-D-erythritol 4-phosphate + CTP + H(+) = 4-CDP-2-C-methyl-D-erythritol + diphosphate. The protein operates within isoprenoid biosynthesis; isopentenyl diphosphate biosynthesis via DXP pathway; isopentenyl diphosphate from 1-deoxy-D-xylulose 5-phosphate: step 2/6. Its function is as follows. Catalyzes the formation of 4-diphosphocytidyl-2-C-methyl-D-erythritol from CTP and 2-C-methyl-D-erythritol 4-phosphate (MEP). This chain is 2-C-methyl-D-erythritol 4-phosphate cytidylyltransferase, found in Shewanella oneidensis (strain ATCC 700550 / JCM 31522 / CIP 106686 / LMG 19005 / NCIMB 14063 / MR-1).